Consider the following 392-residue polypeptide: Phosphopentomutase (392 aa).

6 residues coordinate Mn(2+): aspartate 14, aspartate 286, histidine 291, aspartate 327, histidine 328, and histidine 339.

Belongs to the phosphopentomutase family. Mn(2+) serves as cofactor.

The protein resides in the cytoplasm. It carries out the reaction 2-deoxy-alpha-D-ribose 1-phosphate = 2-deoxy-D-ribose 5-phosphate. The catalysed reaction is alpha-D-ribose 1-phosphate = D-ribose 5-phosphate. Its pathway is carbohydrate degradation; 2-deoxy-D-ribose 1-phosphate degradation; D-glyceraldehyde 3-phosphate and acetaldehyde from 2-deoxy-alpha-D-ribose 1-phosphate: step 1/2. Isomerase that catalyzes the conversion of deoxy-ribose 1-phosphate (dRib-1-P) and ribose 1-phosphate (Rib-1-P) to deoxy-ribose 5-phosphate (dRib-5-P) and ribose 5-phosphate (Rib-5-P), respectively. The protein is Phosphopentomutase of Staphylococcus aureus (strain Mu3 / ATCC 700698).